A 242-amino-acid polypeptide reads, in one-letter code: Uridylate kinase (242 aa).

11–14 (KLSG) lines the ATP pocket. The involved in allosteric activation by GTP stretch occupies residues 19–24 (GNMGYG). Glycine 53 is a UMP binding site. 2 residues coordinate ATP: glycine 54 and arginine 58. Residues aspartate 73 and 134–141 (SGNPFFTT) contribute to the UMP site. Threonine 161, tyrosine 167, and aspartate 170 together coordinate ATP.

This sequence belongs to the UMP kinase family. Homohexamer.

The protein resides in the cytoplasm. It catalyses the reaction UMP + ATP = UDP + ADP. The protein operates within pyrimidine metabolism; CTP biosynthesis via de novo pathway; UDP from UMP (UMPK route): step 1/1. Its activity is regulated as follows. Allosterically activated by GTP. Inhibited by UTP. In terms of biological role, catalyzes the reversible phosphorylation of UMP to UDP. The sequence is that of Uridylate kinase from Trichormus variabilis (strain ATCC 29413 / PCC 7937) (Anabaena variabilis).